A 104-amino-acid polypeptide reads, in one-letter code: Large ribosomal subunit protein bL21 (104 aa).

The protein belongs to the bacterial ribosomal protein bL21 family. Part of the 50S ribosomal subunit. Contacts protein L20.

Its function is as follows. This protein binds to 23S rRNA in the presence of protein L20. This Allorhizobium ampelinum (strain ATCC BAA-846 / DSM 112012 / S4) (Agrobacterium vitis (strain S4)) protein is Large ribosomal subunit protein bL21.